The chain runs to 447 residues: NADH-ubiquinone oxidoreductase chain 4 (447 aa).

The next 13 helical transmembrane spans lie at 28–48, 56–76, 89–109, 110–130, 141–161, 183–203, 213–233, 246–266, 273–293, 298–318, 331–351, 374–394, and 409–431; these read IFLL…FNYI, MVSY…LMAS, FVFM…SMSV, FMFY…ILGW, VYLL…IFYI, LLYL…LVHL, PVSG…YGLL, YNYW…LVCL, ALIA…LLTM, LTGS…LFCL, LLIN…WFLL, IVSW…FSAA, and YSGV…LHWL.

It belongs to the complex I subunit 4 family.

Its subcellular location is the mitochondrion membrane. It carries out the reaction a ubiquinone + NADH + 5 H(+)(in) = a ubiquinol + NAD(+) + 4 H(+)(out). In terms of biological role, core subunit of the mitochondrial membrane respiratory chain NADH dehydrogenase (Complex I) that is believed to belong to the minimal assembly required for catalysis. Complex I functions in the transfer of electrons from NADH to the respiratory chain. The immediate electron acceptor for the enzyme is believed to be ubiquinone. In Anopheles gambiae (African malaria mosquito), this protein is NADH-ubiquinone oxidoreductase chain 4 (mt:ND4).